Consider the following 358-residue polypeptide: tRNA-specific 2-thiouridylase MnmA (358 aa).

Residues 8 to 15 (AMSGGVDS) and Met-35 contribute to the ATP site. The segment at 95–97 (NPD) is interaction with target base in tRNA. The active-site Nucleophile is the Cys-100. A disulfide bridge connects residues Cys-100 and Cys-194. An ATP-binding site is contributed by Gly-124. Positions 144-146 (KDQ) are interaction with tRNA. Catalysis depends on Cys-194, which acts as the Cysteine persulfide intermediate. Positions 301–302 (RY) are interaction with tRNA.

This sequence belongs to the MnmA/TRMU family.

The protein localises to the cytoplasm. The catalysed reaction is S-sulfanyl-L-cysteinyl-[protein] + uridine(34) in tRNA + AH2 + ATP = 2-thiouridine(34) in tRNA + L-cysteinyl-[protein] + A + AMP + diphosphate + H(+). In terms of biological role, catalyzes the 2-thiolation of uridine at the wobble position (U34) of tRNA, leading to the formation of s(2)U34. This Chlamydia trachomatis serovar L2 (strain ATCC VR-902B / DSM 19102 / 434/Bu) protein is tRNA-specific 2-thiouridylase MnmA.